Here is a 218-residue protein sequence, read N- to C-terminus: UPF0502 protein Shewana3_1622 (218 aa).

It belongs to the UPF0502 family.

This chain is UPF0502 protein Shewana3_1622, found in Shewanella sp. (strain ANA-3).